A 209-amino-acid polypeptide reads, in one-letter code: Orotate phosphoribosyltransferase (209 aa).

5-phospho-alpha-D-ribose 1-diphosphate is bound by residues arginine 96, lysine 100, histidine 102, and 122–130 (EDLISTGGS). Serine 126 is a binding site for orotate.

This sequence belongs to the purine/pyrimidine phosphoribosyltransferase family. PyrE subfamily. Homodimer. The cofactor is Mg(2+).

The catalysed reaction is orotidine 5'-phosphate + diphosphate = orotate + 5-phospho-alpha-D-ribose 1-diphosphate. The protein operates within pyrimidine metabolism; UMP biosynthesis via de novo pathway; UMP from orotate: step 1/2. Catalyzes the transfer of a ribosyl phosphate group from 5-phosphoribose 1-diphosphate to orotate, leading to the formation of orotidine monophosphate (OMP). The protein is Orotate phosphoribosyltransferase of Streptococcus thermophilus (strain ATCC BAA-491 / LMD-9).